We begin with the raw amino-acid sequence, 257 residues long: Ribosome maturation factor RimP (257 aa).

The interval 182-257 (LRRGGPPAAD…SRLKDRDSLH (76 aa)) is disordered. The span at 191-205 (DEADEAEEAEDEEVA) shows a compositional bias: acidic residues. A compositionally biased stretch (low complexity) spans 224-236 (KASPAAKPQKQAR).

It belongs to the RimP family.

The protein resides in the cytoplasm. Its function is as follows. Required for maturation of 30S ribosomal subunits. The protein is Ribosome maturation factor RimP of Methylobacterium radiotolerans (strain ATCC 27329 / DSM 1819 / JCM 2831 / NBRC 15690 / NCIMB 10815 / 0-1).